The primary structure comprises 159 residues: Calcium-binding protein CML39 (159 aa).

EF-hand domains follow at residues 18–53, 54–89, 93–128, and 129–159; these read EKNR…LGEQ, MSDE…NDEF, EKKR…LGES, and RTTD…LMMR. The Ca(2+) site is built by Asp31, Asn33, Asp35, Arg37, Glu42, Asp67, Asp69, Asp71, Met73, and Glu78. The Ca(2+) site is built by Asp142, Asn144, Asp146, and Glu153.

As to expression, expressed in the zones of elongation and differentiation in seedling roots and at the root-hypocotyl junction. Expressed from stage 12 of flower development in anthers, specifically in pollen.

In terms of biological role, potential calcium sensor that binds calcium in vitro. This Arabidopsis thaliana (Mouse-ear cress) protein is Calcium-binding protein CML39 (CML39).